Consider the following 275-residue polypeptide: tRNA (guanine-N(1)-)-methyltransferase (275 aa).

Residues Gly139 and 159–164 contribute to the S-adenosyl-L-methionine site; that span reads IGDYIL.

Belongs to the RNA methyltransferase TrmD family. In terms of assembly, homodimer.

The protein resides in the cytoplasm. It catalyses the reaction guanosine(37) in tRNA + S-adenosyl-L-methionine = N(1)-methylguanosine(37) in tRNA + S-adenosyl-L-homocysteine + H(+). Specifically methylates guanosine-37 in various tRNAs. This Lachnoclostridium phytofermentans (strain ATCC 700394 / DSM 18823 / ISDg) (Clostridium phytofermentans) protein is tRNA (guanine-N(1)-)-methyltransferase.